A 285-amino-acid chain; its full sequence is Probable endonuclease 4 (285 aa).

Zn(2+) is bound by residues H69, H109, E145, D179, H182, H216, D229, H231, and E261.

Belongs to the AP endonuclease 2 family. It depends on Zn(2+) as a cofactor.

The catalysed reaction is Endonucleolytic cleavage to 5'-phosphooligonucleotide end-products.. In terms of biological role, endonuclease IV plays a role in DNA repair. It cleaves phosphodiester bonds at apurinic or apyrimidinic (AP) sites, generating a 3'-hydroxyl group and a 5'-terminal sugar phosphate. This is Probable endonuclease 4 from Salmonella typhi.